An 858-amino-acid chain; its full sequence is Taste receptor type 1 member 3 (858 aa).

The N-terminal stretch at 1-20 is a signal peptide; sequence MPGLAILGLSLAAFLELGMG. The Extracellular segment spans residues 21–575; sequence SSLCLSQQFK…FLAWGEPAVL (555 aa). N-linked (GlcNAc...) asparagine glycans are attached at residues asparagine 85, asparagine 130, asparagine 203, asparagine 264, asparagine 379, asparagine 387, asparagine 418, asparagine 439, and asparagine 482. Residues 576-596 traverse the membrane as a helical segment; sequence SLLLLLCLVLGLTLAALGLFV. The Cytoplasmic segment spans residues 597–610; sequence HYWDSPLVQASGGS. The chain crosses the membrane as a helical span at residues 611–631; that stretch reads LFCFGLICLGLFCLSVLLFPG. Residues 632 to 644 are Extracellular-facing; the sequence is RPRSASCLAQQPM. The helical transmembrane segment at 645 to 665 threads the bilayer; that stretch reads AHLPLTGCLSTLFLQAAEIFV. Over 666-687 the chain is Cytoplasmic; sequence ESELPLSWANWLCSYLRGPWAW. Residues 688–708 form a helical membrane-spanning segment; it reads LVVLLATLVEAALCAWYLMAF. Residues 709-735 lie on the Extracellular side of the membrane; sequence PPEVVTDWQVLPTEVLEHCRMRSWVSL. Residues 736–756 form a helical membrane-spanning segment; the sequence is GLVHITNAVLAFLCFLGTFLV. Topologically, residues 757-767 are cytoplasmic; the sequence is QSQPGRYNRAR. The helical transmembrane segment at 768–788 threads the bilayer; that stretch reads GLTFAMLAYFIIWVSFVPLLA. Residues 789-796 lie on the Extracellular side of the membrane; it reads NVQVAYQP. The helical transmembrane segment at 797–817 threads the bilayer; that stretch reads AVQMGAILFCALGILATFHLP. The Cytoplasmic portion of the chain corresponds to 818–858; it reads KCYVLLWLPELNTQEFFLGRSPKEASDGNSGSSEATRGHSE. The interval 839-858 is disordered; sequence PKEASDGNSGSSEATRGHSE.

It belongs to the G-protein coupled receptor 3 family. TAS1R subfamily. As to quaternary structure, forms homodimers or heterodimers with TAS1R1 and TAS1R2.

Its subcellular location is the cell membrane. In terms of biological role, putative taste receptor. TAS1R1/TAS1R3 responds to the umami taste stimulus (the taste of monosodium glutamate) and also to most of the 20 standard L-amino acids, but not to their D-enantiomers or other compounds. TAS1R2/TAS1R3 recognizes diverse natural and synthetic sweeteners. TAS1R3 is essential for the recognition and response to the disaccharide trehalose. Sequence differences within and between species can significantly influence the selectivity and specificity of taste responses. The sequence is that of Taste receptor type 1 member 3 (Tas1r3) from Rattus norvegicus (Rat).